The primary structure comprises 353 residues: Adenine deaminase (353 aa).

Residues histidine 19, histidine 21, and histidine 208 each contribute to the Zn(2+) site. Glutamate 211 (proton donor) is an active-site residue. Zn(2+) is bound at residue aspartate 289. Aspartate 290 is a binding site for substrate.

The protein belongs to the metallo-dependent hydrolases superfamily. Adenosine and AMP deaminases family. Adenine deaminase type 2 subfamily. It depends on Zn(2+) as a cofactor.

The protein localises to the cytoplasm. It is found in the nucleus. It catalyses the reaction adenine + H2O + H(+) = hypoxanthine + NH4(+). Functionally, catalyzes the hydrolytic deamination of adenine to hypoxanthine. Plays an important role in the purine salvage pathway and in nitrogen catabolism. The chain is Adenine deaminase from Gibberella zeae (strain ATCC MYA-4620 / CBS 123657 / FGSC 9075 / NRRL 31084 / PH-1) (Wheat head blight fungus).